Consider the following 861-residue polypeptide: Actin-binding LIM protein 1 (861 aa).

LIM zinc-binding domains follow at residues 97-156 (IHCH…MYGT), 156-216 (TRCH…MSSS), 224-283 (SNCA…LFGV), and 283-343 (VKCE…TKTE). Ser-216 bears the Phosphoserine mark. Residues 374 to 414 (LQLLSPPCLTNSNKNPRQPTRTSSESIYSRPGSSIPGSPGH) are disordered. Positions 381–400 (CLTNSNKNPRQPTRTSSESI) are enriched in polar residues. The segment covering 404–413 (PGSSIPGSPG) has biased composition (low complexity). Ser-411 carries the phosphoserine modification. 2 positions are modified to phosphotyrosine: Tyr-417 and Tyr-440. Disordered stretches follow at residues 459–590 (EDKQ…PTYA) and 634–682 (FPAA…ELLR). Phosphoserine occurs at positions 466, 470, and 475. Residues 467 to 478 (LGESPRTLSPTP) show a composition bias toward polar residues. The residue at position 477 (Thr-477) is a Phosphothreonine. Residue Ser-479 is modified to Phosphoserine. A Phosphotyrosine modification is found at Tyr-483. A compositionally biased stretch (polar residues) spans 493–518 (RSTSQGSINSPVYSRHSYTPTTSRSP). Phosphoserine occurs at positions 496, 499, and 502. Over residues 536–546 (PLRTSSFSSTH) the composition is skewed to low complexity. A phosphoserine mark is found at Ser-582 and Ser-671. A coiled-coil region spans residues 673-723 (REEDEEELLRRRQLQEEQLMKLNSGLGQLILKEEMEKESRERASLASRYDS). Lys-704 participates in a covalent cross-link: Glycyl lysine isopeptide (Lys-Gly) (interchain with G-Cter in SUMO2). Residues 713–748 (ERASLASRYDSPLHSASHAPSSKTSSLPGYGKNGLH) are disordered. Phosphoserine occurs at positions 723, 738, 760, and 789. The span at 724 to 738 (PLHSASHAPSSKTSS) shows a compositional bias: low complexity. Residues 793-861 (MLEPKIFPYE…NDMKKKAKLF (69 aa)) form the HP domain.

Binds F-actin. Interacts with ABRA. In terms of tissue distribution, isoform 1 is detected in adult retina, where it is highly expressed in the ganglion layer. Detected in rod inner segment. Isoform 2 is highly expressed in adult retina, brain, kidney and heart. Isoform 3 is highly expressed in adult retina, brain, kidney, liver, skeletal muscle, spleen and heart. Detected in embryonic retina, brain, spinal cord, peripheral sensory ganglia and thymus.

It localises to the cytoplasm. Its subcellular location is the cytoskeleton. May act as scaffold protein. May play a role in the development of the retina. Has been suggested to play a role in axon guidance. The protein is Actin-binding LIM protein 1 (Ablim1) of Mus musculus (Mouse).